The primary structure comprises 387 residues: MQQPPSNAAGAGQIPSGQQHLWMMMQQQQQQQQMQLSAAPLGQHQYGIGSQNPGSASDVKSLWIGDLQQWMDENYIMSVFAQSGEATSAKVIRNKLTGQSEGYGFIEFVSHSVAERVLQTYNGAPMPSTEQTFRLNWAQAGAGEKRFQTEGPDHTIFVGDLAPEVTDYMLSDTFKNVYGSVKGAKVVLDRTTGRSKGYGFVRFADENEQMRAMTEMNGQYCSTRPMRIGPAANKNALPMQPAMYQNTQGANAGDNDPNNTTIFVGGLDANVTDDELKSIFGQFGELLHVKIPPGKRCGFVQYANKASAEHALSVLNGTQLGGQSIRLSWGRSPNKQSDQAQWNGGGYYGYPPQPQGGYGYAAQPPTQDPNAYYGGYTGYGNYQQQRQ.

RRM domains follow at residues 60–140, 154–233, and 260–332; these read KSLW…WAQA, HTIF…PAAN, and TTIF…WGRS. Residues 329–342 show a composition bias toward polar residues; it reads WGRSPNKQSDQAQW. The tract at residues 329-387 is disordered; sequence WGRSPNKQSDQAQWNGGGYYGYPPQPQGGYGYAAQPPTQDPNAYYGGYTGYGNYQQQRQ.

Belongs to the polyadenylate-binding RBP45 family. As to quaternary structure, interacts with the poly(A) tail of mRNA in nucleus. As to expression, mostly expressed in seedlings, and, to a lower extent, in leaves, stems, and flowers. Present in immature anther tissues (tapetum cells) and mature pollen grains.

Its subcellular location is the nucleus. In terms of biological role, heterogeneous nuclear ribonucleoprotein (hnRNP)-protein binding the poly(A) tail of mRNA and probably involved in some steps of pre-mRNA maturation. The polypeptide is Polyadenylate-binding protein RBP45A (RBP45A) (Arabidopsis thaliana (Mouse-ear cress)).